A 264-amino-acid polypeptide reads, in one-letter code: Ubiquinone biosynthesis protein COQ4 homolog, mitochondrial (264 aa).

The transit peptide at 1–26 (MMQRCWQISLPLARRRLIPSLTSKRT) directs the protein to the mitochondrion. Positions 169, 170, 173, and 185 each coordinate Zn(2+).

It belongs to the COQ4 family. As to quaternary structure, component of a multi-subunit COQ enzyme complex. The cofactor is Zn(2+).

Its subcellular location is the mitochondrion inner membrane. The enzyme catalyses a 4-hydroxy-3-methoxy-5-(all-trans-polyprenyl)benzoate + H(+) = a 2-methoxy-6-(all-trans-polyprenyl)phenol + CO2. The protein operates within cofactor biosynthesis; ubiquinone biosynthesis. Lyase that catalyzes the C1-decarboxylation of 4-hydroxy-3-methoxy-5-(all-trans-polyprenyl)benzoic acid into 2-methoxy-6-(all-trans-polyprenyl)phenol during ubiquinone biosynthesis. The chain is Ubiquinone biosynthesis protein COQ4 homolog, mitochondrial from Drosophila grimshawi (Hawaiian fruit fly).